We begin with the raw amino-acid sequence, 294 residues long: Ethanolamine ammonia-lyase small subunit (294 aa).

The adenosylcob(III)alamin site is built by V207 and E228.

The protein belongs to the EutC family. The basic unit is a heterodimer which dimerizes to form tetramers. The heterotetramers trimerize; 6 large subunits form a core ring with 6 small subunits projecting outwards. It depends on adenosylcob(III)alamin as a cofactor.

The protein localises to the bacterial microcompartment. The catalysed reaction is ethanolamine = acetaldehyde + NH4(+). Its pathway is amine and polyamine degradation; ethanolamine degradation. In terms of biological role, catalyzes the deamination of various vicinal amino-alcohols to oxo compounds. Allows this organism to utilize ethanolamine as the sole source of nitrogen and carbon in the presence of external vitamin B12. The chain is Ethanolamine ammonia-lyase small subunit from Clostridium tetani (strain Massachusetts / E88).